The sequence spans 705 residues: Elongation factor G (705 aa).

The 282-residue stretch at 8–289 folds into the tr-type G domain; that stretch reads VNYRNIGISA…TVINYLPSPK (282 aa). GTP-binding positions include 17-24, 88-92, and 142-145; these read AHIDAGKT, DTPGH, and NKMD.

This sequence belongs to the TRAFAC class translation factor GTPase superfamily. Classic translation factor GTPase family. EF-G/EF-2 subfamily.

It localises to the cytoplasm. Functionally, catalyzes the GTP-dependent ribosomal translocation step during translation elongation. During this step, the ribosome changes from the pre-translocational (PRE) to the post-translocational (POST) state as the newly formed A-site-bound peptidyl-tRNA and P-site-bound deacylated tRNA move to the P and E sites, respectively. Catalyzes the coordinated movement of the two tRNA molecules, the mRNA and conformational changes in the ribosome. This chain is Elongation factor G, found in Wigglesworthia glossinidia brevipalpis.